The sequence spans 880 residues: Nonsense-mediated mRNA decay factor SMG7-like (880 aa).

2 TPR repeats span residues 149 to 183 and 184 to 217; these read QEQY…NPHN and QLAV…GASN. Residues 669–711 form a disordered region; sequence RLGLSKPNGLGPIDETGPVSAFDSLSINSSTEHPASSYSPPTP. A compositionally biased stretch (polar residues) spans 691 to 701; that stretch reads DSLSINSSTEH.

May play a role in growth and development. This is Nonsense-mediated mRNA decay factor SMG7-like from Arabidopsis thaliana (Mouse-ear cress).